Reading from the N-terminus, the 471-residue chain is GDP-fucose protein O-fucosyltransferase 3 (471 aa).

At 1–8 (MNRMWEKK) the chain is on the cytoplasmic side. Residues 9–29 (FWISCFFIILFFILVTLQVMV) form a helical; Signal-anchor for type II membrane protein membrane-spanning segment. Over 30-471 (ELGRFEKRET…EFWNLVFKFQ (442 aa)) the chain is Lumenal. 4 N-linked (GlcNAc...) asparagine glycosylation sites follow: asparagine 102, asparagine 122, asparagine 160, and asparagine 310. Residues cysteine 381 and cysteine 384 are joined by a disulfide bond. The N-linked (GlcNAc...) asparagine glycan is linked to asparagine 457.

This sequence belongs to the glycosyltransferase 10 family.

It is found in the endoplasmic reticulum membrane. The enzyme catalyses L-threonyl-[protein] + GDP-beta-L-fucose = 3-O-(alpha-L-fucosyl)-L-threonyl-[protein] + GDP + H(+). The catalysed reaction is L-seryl-[protein] + GDP-beta-L-fucose = 3-O-(alpha-L-fucosyl)-L-seryl-[protein] + GDP + H(+). It participates in protein modification; protein glycosylation. Its function is as follows. Protein O-fucosyltransferase that specifically catalyzes O-fucosylation of serine or threonine residues in EMI domains of target proteins. Attaches fucose through an O-glycosidic linkage. O-fucosylation of EMI domain-containing proteins may be required for facilitating protein folding and secretion. This chain is GDP-fucose protein O-fucosyltransferase 3 (fut10), found in Xenopus tropicalis (Western clawed frog).